A 700-amino-acid chain; its full sequence is Calpain-2 catalytic subunit (700 aa).

Ala2 is modified (N-acetylalanine). Residues 2–19 (AGIAMKLAKDREAAEGLG) constitute a propeptide, anchors to the small subunit. The Calpain catalytic domain maps to 45 to 344 (LFQDPSFPAL…YSRLEICNLT (300 aa)). Residues Ile89, Gly91, and Asp96 each contribute to the Ca(2+) site. Cys105 is an active-site residue. Glu175, Gln229, and Lys230 together coordinate Ca(2+). Catalysis depends on residues His262 and Asn286. The Ca(2+) site is built by Glu292, Asp299, Gln319, and Glu323. The segment at 345 to 514 (PDTLTCDSYK…KKADYQTVDD (170 aa)) is domain III. The tract at residues 515 to 529 (EIEANIEEIEANEED) is linker. The tract at residues 530–700 (IGDGFRRLFA…LISWLSFSVL (171 aa)) is domain IV. 16 residues coordinate Ca(2+): Ala542, Asp545, Glu547, Glu552, Asp585, Asp587, Ser589, Lys591, Glu596, Asp615, Asp617, Ser619, Thr621, Glu626, Asp658, and Asn661. EF-hand domains follow at residues 572-605 (FSIE…TKIQ) and 602-637 (TKIQ…AGFK). The region spanning 667 to 700 (VRLEILFKIFKQLDPENTGTIQLDLISWLSFSVL) is the EF-hand 3 domain.

The protein belongs to the peptidase C2 family. In terms of assembly, forms a heterodimer with a small (regulatory) subunit (CAPNS1). Interacts with CPEB3; this leads to cleavage of CPEB3. The cofactor is Ca(2+). Ubiquitous.

It is found in the cytoplasm. It localises to the cell membrane. The enzyme catalyses Broad endopeptidase specificity.. Its activity is regulated as follows. Activated by 200-1000 micromolar concentrations of calcium and inhibited by calpastatin. Its function is as follows. Calcium-regulated non-lysosomal thiol-protease which catalyze limited proteolysis of substrates involved in cytoskeletal remodeling and signal transduction. Proteolytically cleaves MYOC at 'Arg-226'. Proteolytically cleaves CPEB3 following neuronal stimulation which abolishes CPEB3 translational repressor activity, leading to translation of CPEB3 target mRNAs. The sequence is that of Calpain-2 catalytic subunit (Capn2) from Rattus norvegicus (Rat).